A 725-amino-acid chain; its full sequence is DNA replication licensing factor MCM7 (725 aa).

Residues 333-538 (IYNKLARSLA…METDLEMARH (206 aa)) form the MCM domain. 383-390 (GDPGVAKS) is an ATP binding site. The short motif at 515 to 518 (SRFD) is the Arginine finger element.

It belongs to the MCM family. As to quaternary structure, component of the minichromosome maintenance (MCM) complex, a heterotetramer composed of MCM2, MCM3, MCM4, MCM5, MCM6 and MCM7.

It localises to the nucleus. It catalyses the reaction ATP + H2O = ADP + phosphate + H(+). Probable component of the MCM2-7 complex (MCM complex) that may function as a DNA helicase and which is essential to undergo a single round of replication initiation and elongation per cell cycle in eukaryotic cells. This is DNA replication licensing factor MCM7 (MCM7) from Oryza sativa subsp. indica (Rice).